The primary structure comprises 140 residues: Lysozyme E (140 aa).

An N-terminal signal peptide occupies residues 1–18 (MKAFIVLVALAMAAPALG). Positions 19–140 (RTLDRCSLAR…GWLPSIDGCF (122 aa)) constitute a C-type lysozyme domain. Disulfide bonds link Cys24–Cys139, Cys45–Cys129, Cys80–Cys96, and Cys92–Cys110. Residues Glu50 and Asp68 contribute to the active site.

This sequence belongs to the glycosyl hydrolase 22 family. As to expression, found in the midgut.

The catalysed reaction is Hydrolysis of (1-&gt;4)-beta-linkages between N-acetylmuramic acid and N-acetyl-D-glucosamine residues in a peptidoglycan and between N-acetyl-D-glucosamine residues in chitodextrins.. In terms of biological role, unlikely to play an active role in the humoral immune defense. May have a function in the digestion of bacteria in the food. This Drosophila melanogaster (Fruit fly) protein is Lysozyme E (LysE).